The chain runs to 221 residues: Probable transaldolase (221 aa).

The Schiff-base intermediate with substrate role is filled by K87.

It belongs to the transaldolase family. Type 3B subfamily.

The protein localises to the cytoplasm. It catalyses the reaction D-sedoheptulose 7-phosphate + D-glyceraldehyde 3-phosphate = D-erythrose 4-phosphate + beta-D-fructose 6-phosphate. It participates in carbohydrate degradation; pentose phosphate pathway; D-glyceraldehyde 3-phosphate and beta-D-fructose 6-phosphate from D-ribose 5-phosphate and D-xylulose 5-phosphate (non-oxidative stage): step 2/3. Its function is as follows. Transaldolase is important for the balance of metabolites in the pentose-phosphate pathway. In Syntrophobacter fumaroxidans (strain DSM 10017 / MPOB), this protein is Probable transaldolase.